Here is a 209-residue protein sequence, read N- to C-terminus: Claudin-4 (209 aa).

At 1–7 (MASMGLQ) the chain is on the cytoplasmic side. The tract at residues 1 to 103 (MASMGLQVMG…GVLLSVVGGK (103 aa)) is interaction with EPHA2. Residues 8–28 (VMGIALAVLGWLAVMLCCALP) traverse the membrane as a helical segment. The Extracellular segment spans residues 29 to 81 (MWRVTAFIGSNIVTSQTIWEGLWMNCVVQSTGQMQCKVYDSLLALPQDLQAAR). C54 and C64 form a disulfide bridge. A helical membrane pass occupies residues 82 to 102 (ALVIISIIVAALGVLLSVVGG). At 103–117 (KCTNCLEDESAKAKT) the chain is on the cytoplasmic side. Residues 118-138 (MIVAGVVFLLAGLMVIVPVSW) traverse the membrane as a helical segment. Residues 139–160 (TAHNIIQDFYNPLVASGQKREM) lie on the Extracellular side of the membrane. The chain crosses the membrane as a helical span at residues 161 to 181 (GASLYVGWAASGLLLLGGGLL). Topologically, residues 182 to 209 (CCNCPPRTDKPYSAKYSAARSAAASNYV) are cytoplasmic. Y208 carries the phosphotyrosine; by EPHA2 modification. The tract at residues 208–209 (YV) is interactions with TJP1, TJP2 and TJP3.

This sequence belongs to the claudin family. As to quaternary structure, can form heteropolymeric strands with other claudins. Interacts with CLDN8. Interacts with CLDN1. Directly interacts with TJP1/ZO-1. Interacts with TJP2/ZO-2 and TJP3/ZO-3. Interacts with EPHA2; phosphorylates CLDN4 and may regulate tight junctions. (Microbial infection) Interacts (via both extracellular domains) with Clostridium perfringens enterotoxin CPE; the interaction may disrupt claudin assembly in tight junctions. Phosphorylated. Phosphorylation by EPHA2 is stimulated by EFNA1 and alters interaction with TJP1.

Its subcellular location is the cell junction. It is found in the tight junction. The protein localises to the cell membrane. It catalyses the reaction chloride(in) = chloride(out). The catalysed reaction is bromide(in) = bromide(out). The enzyme catalyses iodide(out) = iodide(in). It carries out the reaction fluoride(in) = fluoride(out). Functionally, can associate with other claudins to regulate tight junction structural and functional strand dynamics. May coassemble with CLDN8 into tight junction strands containing anion-selective channels that convey paracellular chloride permeability in renal collecting ducts. May integrate into CLDN3 strands to modulate localized tight junction barrier properties. May disrupt strand assembly of channel-forming CLDN2 and CLDN15 and inhibit cation conductance. Cannot form tight junction strands on its own. The chain is Claudin-4 from Homo sapiens (Human).